A 272-amino-acid chain; its full sequence is Dioscorin DB3L (272 aa).

The first 25 residues, 1–25 (MSSSTLFHLFLLSSLLFSCLSNARP), serve as a signal peptide directing secretion. Residues 28-263 (DDFSYIEGSP…LKFRTIFFYP (236 aa)) form the Alpha-carbonic anhydrase domain. Cysteine 53 and cysteine 213 are disulfide-bonded.

Belongs to the alpha-class carbonic anhydrase family. In terms of assembly, homodimer; disulfide-linked. Post-translationally, not glycosylated. As to expression, expressed in tuber (at protein level).

Loss of hemagglutinating activity by EDTA treatment. The activity is fully recovered by the addition of 5 mM Ca(2+) ions, but not with Mg(2+) and Mn 2(+). Hemagglutination activity is inhibited by maltose and its derivatives, with maltopentaose and maltohexaose being the best inhibitors followed by maltose and iso maltose. Not inhibited by glycoproteins. Maltose-binding lectin. No affinity is detected toward glucose. Has hemagglutinating activity against rabbit erythrocytes at 3.9 ug/ml. No carbonate dehydratase or trypsin inhibitor activity detected by measuring the hydrolysis of 4-nitrophenyl acetate or the inhibition of bovine trypsin-catalyzed hydrolysis of N-benzoyl-L-arginine ethyl ester, respectively. The protein is Dioscorin DB3L of Dioscorea polystachya (Chinese yam).